We begin with the raw amino-acid sequence, 442 residues long: Cyclic 2,3-diphosphoglycerate synthetase (442 aa).

Belongs to the cyclic 2,3-diphosphoglycerate synthetase family.

The protein localises to the cytoplasm. The enzyme catalyses (2R)-2,3-bisphosphoglycerate + ATP + H(+) = cyclic (2R)-2,3-bisphosphoglycerate + ADP + phosphate. In terms of biological role, catalyzes the formation of cyclic 2,3-diphosphoglycerate (cDPG) by formation of an intramolecular phosphoanhydride bond at the expense of ATP. In Rubrobacter xylanophilus (strain DSM 9941 / JCM 11954 / NBRC 16129 / PRD-1), this protein is Cyclic 2,3-diphosphoglycerate synthetase.